Consider the following 132-residue polypeptide: Large-conductance mechanosensitive channel (132 aa).

Transmembrane regions (helical) follow at residues 14 to 34 and 67 to 87; these read VIDL…VSSL and GNFI…FMFV.

The protein belongs to the MscL family. As to quaternary structure, homopentamer.

The protein localises to the cell membrane. Its function is as follows. Channel that opens in response to stretch forces in the membrane lipid bilayer. May participate in the regulation of osmotic pressure changes within the cell. This Bacillus anthracis (strain A0248) protein is Large-conductance mechanosensitive channel.